The chain runs to 349 residues: 3-isopropylmalate dehydrogenase (349 aa).

Substrate-binding residues include R91, R101, R129, and D219. Mg(2+) is bound by residues D219, D243, and D247. An NAD(+)-binding site is contributed by 277-289; it reads GSAPDIAGLGKAN.

It belongs to the isocitrate and isopropylmalate dehydrogenases family. LeuB type 1 subfamily. As to quaternary structure, homodimer. The cofactor is Mg(2+). Mn(2+) is required as a cofactor.

The protein resides in the cytoplasm. The catalysed reaction is (2R,3S)-3-isopropylmalate + NAD(+) = 4-methyl-2-oxopentanoate + CO2 + NADH. It participates in amino-acid biosynthesis; L-leucine biosynthesis; L-leucine from 3-methyl-2-oxobutanoate: step 3/4. Functionally, catalyzes the oxidation of 3-carboxy-2-hydroxy-4-methylpentanoate (3-isopropylmalate) to 3-carboxy-4-methyl-2-oxopentanoate. The product decarboxylates to 4-methyl-2 oxopentanoate. This chain is 3-isopropylmalate dehydrogenase, found in Zymomonas mobilis subsp. mobilis (strain ATCC 31821 / ZM4 / CP4).